The chain runs to 248 residues: 2,3-bisphosphoglycerate-dependent phosphoglycerate mutase (248 aa).

Substrate contacts are provided by residues 10-17 (RHGQSEWN), 23-24 (TG), R62, 89-92 (ERHY), K100, 116-117 (RR), and 183-184 (GN). Residue H11 is the Tele-phosphohistidine intermediate of the active site. E89 functions as the Proton donor/acceptor in the catalytic mechanism.

Belongs to the phosphoglycerate mutase family. BPG-dependent PGAM subfamily.

It carries out the reaction (2R)-2-phosphoglycerate = (2R)-3-phosphoglycerate. It participates in carbohydrate degradation; glycolysis; pyruvate from D-glyceraldehyde 3-phosphate: step 3/5. Functionally, catalyzes the interconversion of 2-phosphoglycerate and 3-phosphoglycerate. The chain is 2,3-bisphosphoglycerate-dependent phosphoglycerate mutase from Corynebacterium glutamicum (strain ATCC 13032 / DSM 20300 / JCM 1318 / BCRC 11384 / CCUG 27702 / LMG 3730 / NBRC 12168 / NCIMB 10025 / NRRL B-2784 / 534).